A 295-amino-acid chain; its full sequence is Alpha-ketoglutarate-dependent dioxygenase alkB homolog 3 (295 aa).

Residues 1 to 48 (MGDKRQRARVQGAWATPTKSQSAARPATPARSRPSQTPGPSWRSKEQQ) form a disordered region. Residues 22 to 35 (SAARPATPARSRPS) are compositionally biased toward low complexity. Residues tryptophan 115 and 141-143 (YTY) contribute to the substrate site. A Fe2OG dioxygenase domain is found at 172–278 (TFNSLLCNFY…RVNLTFRTVY (107 aa)). Leucine 177 bears the (4R)-5-hydroxyleucine; alternate mark. Leucine 177 is subject to (4R)-5-oxoleucine; alternate. 179–181 (NFY) contributes to the 2-oxoglutarate binding site. Positions 191 and 193 each coordinate Fe cation. Substrate is bound at residue aspartate 194. Histidine 257 provides a ligand contact to Fe cation. 2-oxoglutarate-binding positions include 269–275 (RVNLTFR) and arginine 275.

This sequence belongs to the alkB family. Interacts with the ASCC complex composed of ASCC1, ASCC2 and ASCC3. Interacts directly with ASCC3, and is thereby recruited to the ASCC complex. Interacts with OTUD4; the interaction is direct. Interacts with USP7 and USP9X. Requires Fe(2+) as cofactor. Post-translationally, ubiquitinated; undergoes 'Lys-48'-linked polyubiquitination. OTUD4 promotes USP7 and USP9X-dependent deubiquitination of 'Lys-48'-polyubiquitinated ALKBH3 promoting the repair of alkylated DNA lesions.

It is found in the nucleus. The protein localises to the cytoplasm. It catalyses the reaction an N(1)-methyladenosine in mRNA + 2-oxoglutarate + O2 = an adenosine in mRNA + formaldehyde + succinate + CO2. The enzyme catalyses a methylated nucleobase within DNA + 2-oxoglutarate + O2 = a nucleobase within DNA + formaldehyde + succinate + CO2. It carries out the reaction an N(1)-methyl-2'-deoxyadenosine in single-stranded DNA + 2-oxoglutarate + O2 = a 2'-deoxyadenosine in single-stranded DNA + formaldehyde + succinate + CO2 + H(+). The catalysed reaction is an N(3)-methyl-2'-deoxycytidine in single-stranded DNA + 2-oxoglutarate + O2 = a 2'-deoxycytidine in single-stranded DNA + formaldehyde + succinate + CO2 + H(+). It catalyses the reaction a 3,N(4)-etheno-2'-deoxycytidine in single-stranded DNA + 2-oxoglutarate + O2 + H2O = a 2'-deoxycytidine in single-stranded DNA + glyoxal + succinate + CO2. With respect to regulation, activated by ascorbate. In terms of biological role, dioxygenase that mediates demethylation of DNA and RNA containing 1-methyladenosine (m1A). Repairs alkylated DNA containing 1-methyladenosine (m1A) and 3-methylcytosine (m3C) by oxidative demethylation. Has a strong preference for single-stranded DNA. Able to process alkylated m3C within double-stranded regions via its interaction with ASCC3, which promotes DNA unwinding to generate single-stranded substrate needed for ALKBH3. Can repair exocyclic 3,N4-ethenocytosine adducs in single-stranded DNA. Also acts on RNA. Demethylates N(1)-methyladenosine (m1A) RNA, an epigenetic internal modification of messenger RNAs (mRNAs) highly enriched within 5'-untranslated regions (UTRs) and in the vicinity of start codons. Requires molecular oxygen, alpha-ketoglutarate and iron. This Rattus norvegicus (Rat) protein is Alpha-ketoglutarate-dependent dioxygenase alkB homolog 3.